A 270-amino-acid polypeptide reads, in one-letter code: Aliphatic sulfonates import ATP-binding protein SsuB 1 (270 aa).

Residues 18-232 (VQLRNVVRQF…DSGQAGFQLI (215 aa)) enclose the ABC transporter domain. 50-57 (GASGSGKT) contributes to the ATP binding site. Residues 247-270 (PDTAPQASAPDSTFSELRRVASAR) are disordered. The span at 251–261 (PQASAPDSTFS) shows a compositional bias: polar residues.

It belongs to the ABC transporter superfamily. Aliphatic sulfonates importer (TC 3.A.1.17.2) family. As to quaternary structure, the complex is composed of two ATP-binding proteins (SsuB), two transmembrane proteins (SsuC) and a solute-binding protein (SsuA).

It is found in the cell inner membrane. The enzyme catalyses ATP + H2O + aliphatic sulfonate-[sulfonate-binding protein]Side 1 = ADP + phosphate + aliphatic sulfonateSide 2 + [sulfonate-binding protein]Side 1.. Its function is as follows. Part of the ABC transporter complex SsuABC involved in aliphatic sulfonates import. Responsible for energy coupling to the transport system. This chain is Aliphatic sulfonates import ATP-binding protein SsuB 1, found in Pseudomonas syringae pv. tomato (strain ATCC BAA-871 / DC3000).